Here is a 111-residue protein sequence, read N- to C-terminus: MSNPQDDKPIDQEQEAHVILKVKSQDGDEVLFKNKKSAPLKKLMYVYCDRRGLKLDAFAFIFNGARIGGLETPDELDMEDGDVIDACRAMSGGLRANQRQWSYMLFDHNGL.

A Ubiquitin-like domain is found at 16–93 (AHVILKVKSQ…IDACRAMSGG (78 aa)). Glycine 93 is covalently cross-linked (Glycyl lysine isopeptide (Gly-Lys) (interchain with K-? in acceptor proteins)).

Belongs to the ubiquitin family. SUMO subfamily. As to quaternary structure, interacts with SAE2, SCE1, SIZ1 and MMS21. Covalently attached to a number of proteins. Interacts with NPR1; this interaction promotes NPR1 phosphorylation and triggers its sumoylation and subsequent degradation.

It localises to the nucleus. The protein resides in the cytoplasm. Ubiquitin-like protein which can be covalently attached to target lysines as a monomer. Does not seem to be involved in protein degradation and may function as an antagonist of ubiquitin in the degradation process. Promotes NPR1 sumoylation to activate defense gene expression and regulate its degradation. The chain is Small ubiquitin-related modifier 3 from Arabidopsis thaliana (Mouse-ear cress).